Here is a 92-residue protein sequence, read N- to C-terminus: MLCAVYKSRKKAETYLFVERREDFSRVPEVLMSTFGRPELVLMTKLDPAKPLGIASTSRVIEALGSQGFYLQVPPPPENLLEQHKAQLKVSR.

The YcgL domain occupies Met1 to Lys85.

The polypeptide is YcgL domain-containing protein ASA_2166 (Aeromonas salmonicida (strain A449)).